Consider the following 559-residue polypeptide: Formate--tetrahydrofolate ligase (559 aa).

Residue 68 to 75 participates in ATP binding; the sequence is TPAGEGKS.

Belongs to the formate--tetrahydrofolate ligase family.

It catalyses the reaction (6S)-5,6,7,8-tetrahydrofolate + formate + ATP = (6R)-10-formyltetrahydrofolate + ADP + phosphate. It participates in one-carbon metabolism; tetrahydrofolate interconversion. The chain is Formate--tetrahydrofolate ligase from Lactobacillus gasseri (strain ATCC 33323 / DSM 20243 / BCRC 14619 / CIP 102991 / JCM 1131 / KCTC 3163 / NCIMB 11718 / NCTC 13722 / AM63).